We begin with the raw amino-acid sequence, 1037 residues long: Sodium/potassium exporting P-type ATPase cta3 (1037 aa).

The Cytoplasmic portion of the chain corresponds to 1–61 (MVTINISNPV…GVSAWKVLLR (61 aa)). A helical transmembrane segment spans residues 62–82 (QVLNAMCVVLILAAALSFGTT). Position 83 (Asp83) is a topological domain, extracellular. The chain crosses the membrane as a helical span at residues 84–104 (WIEGGVISAIIVLNITVGFIQ). The Cytoplasmic portion of the chain corresponds to 105-281 (EYKAEKTMDS…LNVGTPLQRK (177 aa)). Residues 282–302 (LTVLAYILFCIAIILAIIVMA) traverse the membrane as a helical segment. Over 303–313 (AHSFHVTNEVS) the chain is Extracellular. Residues 314–334 (IYAISLGISIIPESLIAVLSI) traverse the membrane as a helical segment. The Cytoplasmic segment spans residues 335–760 (TMAMGQKNMS…GRRMFDNIMR (426 aa)). Residue Asp368 is the 4-aspartylphosphate intermediate of the active site. The Mg(2+) site is built by Asp368 and Thr370. Residues Thr370, Glu468, Lys520, Arg559, Thr620, Gly621, Asp622, Arg678, and Lys684 each coordinate ATP. Asp703 contributes to the Mg(2+) binding site. Asn706 provides a ligand contact to ATP. The helical transmembrane segment at 761-781 (FVLHLLVSNVGEVILLVVGLA) threads the bilayer. Residues 782–787 (FRDEVH) lie on the Extracellular side of the membrane. Residues 788–808 (LSVFPMSPVEILWCNMITSSF) traverse the membrane as a helical segment. Residues 809 to 844 (PSMGLGMELAQPDVMERLPHDNKVGIFQKSLIVDMM) are Cytoplasmic-facing. Residues 845-865 (VYGFFLGVVSLMTWVVIMYGF) form a helical membrane-spanning segment. The Extracellular segment spans residues 866-889 (GTGNLSYDCNAHYHAGCNDVFKAR). The N-linked (GlcNAc...) asparagine glycan is linked to Asn869. The chain crosses the membrane as a helical span at residues 890-910 (SAVFAVVTFCILIMAVEVKNF). The Cytoplasmic portion of the chain corresponds to 911-939 (DNSLFNLHGIPWGEWNFRYFLHTLVENKF). A helical transmembrane segment spans residues 940 to 960 (LAWAIALAAVSVFPTIYIPVI). Over 961–969 (NRDVFKHTY) the chain is Extracellular. Residues 970 to 990 (IGWEWGVVAVAVMFYFFYVEI) form a helical membrane-spanning segment. Topologically, residues 991–1037 (WKSIRRSLTNPQKKGKFRRTLSNTITTESKLSEKDLEHRLFLQSRRA) are cytoplasmic. Position 1012 is a phosphoserine (Ser1012).

The protein belongs to the cation transport ATPase (P-type) (TC 3.A.3) family. Type IID subfamily. Mg(2+) serves as cofactor. In terms of processing, the active site is phosphorylated in presence of sodium or potassium and in conditions of higher pH. Not phosphorylated in presence of calcium ions.

It is found in the cell membrane. It catalyses the reaction Na(+)(in) + ATP + H2O = Na(+)(out) + ADP + phosphate + H(+). The catalysed reaction is K(+)(in) + ATP + H2O = K(+)(out) + ADP + phosphate + H(+). Functionally, catalyzes the hydrolysis of ATP coupled with the export of sodium and potassium from the cell. May export sodium less efficiently. May transport other cations such as lithium. Sodium/potassium efflux ATPases are involved in salt tolerance and maintaining the membrane potential across the plasma membrane in high salinity (Na+) or alkaline (K+) environments. In Schizosaccharomyces pombe (strain 972 / ATCC 24843) (Fission yeast), this protein is Sodium/potassium exporting P-type ATPase cta3.